The chain runs to 222 residues: MNEETSMDEGEQEKIELIMGLRRQGIRDKRVLSALERVPREKFISATFRKQAYEDHALPIECGQTISQPYIVAYMTEQLHVGERMKVLEVGTGSGYQAAVLSRLCRRVYTIERYRTLLKDAVKRLEDLHIHNVTAKVGDGAQGWPEQAPFDRIIVTAAAPSVPQKLVDQLKEGGLMIVPVAVSGARGEQKLVRIERTGDGVKREELLPVRFVPLVEGVAKES.

Serine 67 is a catalytic residue.

This sequence belongs to the methyltransferase superfamily. L-isoaspartyl/D-aspartyl protein methyltransferase family.

It is found in the cytoplasm. It catalyses the reaction [protein]-L-isoaspartate + S-adenosyl-L-methionine = [protein]-L-isoaspartate alpha-methyl ester + S-adenosyl-L-homocysteine. Functionally, catalyzes the methyl esterification of L-isoaspartyl residues in peptides and proteins that result from spontaneous decomposition of normal L-aspartyl and L-asparaginyl residues. It plays a role in the repair and/or degradation of damaged proteins. This is Protein-L-isoaspartate O-methyltransferase from Parvibaculum lavamentivorans (strain DS-1 / DSM 13023 / NCIMB 13966).